We begin with the raw amino-acid sequence, 870 residues long: Importin subunit beta-1 (870 aa).

A2 carries the post-translational modification N-acetylalanine. HEAT repeat units follow at residues 4–33, 35–67, 87–126, 132–161, 172–204, 214–249, 255–304, 313–361, 365–395, 403–440, 456–492, 498–535, 542–588, 596–637, 642–679, 684–722, 730–776, and 826–868; these read EVTQ…FQEQ, LAGF…KNAL, MSTK…ELPQ, LIVS…LCEE, VNKI…YMAL, DMER…IAST, AHYM…EFAG, FTKQ…RAVG, VPHV…GSIL, LMAI…IFEF, CQQI…EDIG, TPFF…EVVR, STMV…QVII, TKSK…AYAA, AKYM…CRAL, LPYC…ALAI, WRYS…FQGF, and SHVG…TRAI. Residues 23 to 103 form the Importin N-terminal domain; sequence AEESLKQFQE…RAFLLKTLSA (81 aa).

The protein belongs to the importin beta family. Importin beta-1 subfamily. As to quaternary structure, forms a complex with the importin subunits alpha IMPA1 or IMPA2, the nucleoporin NUP62 and the Ran-GTP-binding proteins RAN1, RAN2 or RAN3. Expressed in roots, cotyledons, leaves, stems, petals, stamen, stigma, siliques, embryos and guard cells.

It localises to the cytoplasm. Its subcellular location is the nucleus. Its function is as follows. Acts as a negative effector of drought tolerance. Involved in the regulation of stomatal closure and in the abscisic acid (ABA)-mediated pathway that lead to drought tolerance. Does not directly mediate nuclear import of ABI1 and ABI2 which are key regulators of the ABA signaling pathway. May be involved in nuclear translocation of other type 2C protein phosphatases that mediate ABA signaling. In Arabidopsis thaliana (Mouse-ear cress), this protein is Importin subunit beta-1.